Reading from the N-terminus, the 340-residue chain is Polyporopepsin (340 aa).

The 317-residue stretch at 14–330 folds into the Peptidase A1 domain; it reads YVVNVGVGSP…DTTNKRLGLA (317 aa). Aspartate 32 is a catalytic residue. Asparagine 192 carries an N-linked (GlcNAc...) asparagine glycan. Aspartate 212 is a catalytic residue. N-linked (GlcNAc...) asparagine glycosylation is present at asparagine 238.

Belongs to the peptidase A1 family.

It carries out the reaction Milk clotting activity, broad specificity, but fails to cleave 15-Leu-|-Tyr-16 or 16-Tyr-|-Leu-17 of insulin B chain.. This chain is Polyporopepsin, found in Irpex lacteus (Milk-white toothed polypore).